The sequence spans 460 residues: Elongation factor 1-alpha (460 aa).

Glycine 2 is modified (n,N,N-trimethylglycine). Lysine 3 is subject to N6,N6-dimethyllysine; alternate. Lysine 3 is subject to N6-methyllysine; alternate. Positions 6–241 (KTHINVVVIG…DSIEPPKRPT (236 aa)) constitute a tr-type G domain. The segment at 15 to 22 (GHVDSGKS) is G1. GTP is bound at residue 15–22 (GHVDSGKS). Lysine 31 is modified (N6-methyllysine). Positions 71–75 (GITID) are G2. Residue lysine 80 is modified to N6,N6,N6-trimethyllysine. The segment at 92 to 95 (DAPG) is G3. GTP is bound by residues 92–96 (DAPGH) and 154–157 (NKMD). Positions 154–157 (NKMD) are G4. The interval 193–195 (SGF) is G5. Position 317 is an N6,N6-dimethyllysine; alternate (lysine 317). Lysine 317 is modified (N6-methyllysine; alternate). Lysine 391 is modified (N6-methyllysine).

This sequence belongs to the TRAFAC class translation factor GTPase superfamily. Classic translation factor GTPase family. EF-Tu/EF-1A subfamily.

It localises to the cytoplasm. In terms of biological role, this protein promotes the GTP-dependent binding of aminoacyl-tRNA to the A-site of ribosomes during protein biosynthesis. The polypeptide is Elongation factor 1-alpha (TEF) (Podospora anserina (Pleurage anserina)).